The primary structure comprises 638 residues: Plasma kallikrein (638 aa).

An N-terminal signal peptide occupies residues 1-19; that stretch reads MILFNRVGYFVSLFATVSC. 4 Apple domains span residues 21–104, 111–194, 201–284, and 292–375; these read CMTQ…LKQC, CHRD…LKSC, CPMD…LLTC, and CHSK…LRLC. 18 disulfides stabilise this stretch: cysteine 21–cysteine 104, cysteine 47–cysteine 77, cysteine 51–cysteine 57, cysteine 111–cysteine 194, cysteine 137–cysteine 166, cysteine 141–cysteine 147, cysteine 201–cysteine 284, cysteine 227–cysteine 256, cysteine 231–cysteine 237, cysteine 292–cysteine 375, cysteine 318–cysteine 347, cysteine 322–cysteine 328, cysteine 340–cysteine 345, cysteine 383–cysteine 503, cysteine 419–cysteine 435, cysteine 517–cysteine 584, cysteine 548–cysteine 563, and cysteine 574–cysteine 602. Asparagine 127 carries N-linked (GlcNAc...) asparagine glycosylation. Residue asparagine 215 is glycosylated (N-linked (GlcNAc...) asparagine). An N-linked (GlcNAc...) asparagine glycan is attached at asparagine 308. The region spanning 391-626 is the Peptidase S1 domain; that stretch reads IVGGTNASLG…YMDWILEKTQ (236 aa). A glycan (N-linked (GlcNAc...) asparagine) is linked at asparagine 396. Active-site charge relay system residues include histidine 434 and aspartate 483. N-linked (GlcNAc...) asparagine glycosylation occurs at asparagine 494. The active-site Charge relay system is the serine 578.

Belongs to the peptidase S1 family. Plasma kallikrein subfamily. In terms of assembly, forms a heterodimer with SERPINA5. The zymogen is activated by factor XIIa, which cleaves the molecule into a light chain, which contains the active site, and a heavy chain, which associates with HMW kininogen. These chains are linked by one or more disulfide bonds.

The protein resides in the secreted. The catalysed reaction is Cleaves selectively Arg-|-Xaa and Lys-|-Xaa bonds, including Lys-|-Arg and Arg-|-Ser bonds in (human) kininogen to release bradykinin.. With respect to regulation, inhibited by SERPINA5. In terms of biological role, the enzyme cleaves Lys-Arg and Arg-Ser bonds. It activates, in a reciprocal reaction, factor XII after its binding to a negatively charged surface. It also releases bradykinin from HMW kininogen and may also play a role in the renin-angiotensin system by converting prorenin into renin. The sequence is that of Plasma kallikrein (Klkb1) from Mus musculus (Mouse).